The chain runs to 618 residues: MPHYRSRTSTHGRNMAGARALWRATGMKDGDFGKPIIAVVNSFTQFVPGHVHLKDLGALVASQIEAAGGVAKEFNTIAVDDGIAMGHGGMLYSLPSRELIADSVEYMVNAHCADAMVCISNCDKITPGMLMAAMRLNIPVVFVSGGPMEAGKVVSPTDGKVIKLDLVDAMIKAADPNVSDAEAEQVERSACPTCGSCSGMFTANSMNCLTEAIGLALPGNGTIVATHAWRRGLFEQAGRLVVDLCRRYYEQDDASVLPRSIATKAAFENAMSLDVAMGGSTNTVLHLLAAAQEAGVDFTMADIDRISRKVPCLCKAAPATDKYHIEDVHRAGGILGILGELGRANLLDLSCGNVHSGTLGQAIAQWDVAGGAGEAAQTFYRAAPGGVPTTVAFSQDKTFLTLDLDRKAGCIRSKEHAYSQDGGLAVLYGNLAEKGCIVKTAGVDESQWVFTGRARVFESQEDAVEGILGDKVEAGDVVIIRYEGPKGGPGMQEMLYPTSYLKSKGLGKTCALFTDGRFSGGSSGLVIGHASPEAAEGGAIGLVEDGDVIEIDIPKRRMHLAVDDAELARRRAAMDARGDKAWQPLDRERVVSLALQAYAALATSADRGAVRDLSQIKR.

Position 81 (Asp81) interacts with Mg(2+). Residue Cys122 coordinates [2Fe-2S] cluster. Residues Asp123 and Lys124 each contribute to the Mg(2+) site. Residue Lys124 is modified to N6-carboxylysine. Cys197 contributes to the [2Fe-2S] cluster binding site. Residue Glu493 participates in Mg(2+) binding. Residue Ser519 is the Proton acceptor of the active site.

It belongs to the IlvD/Edd family. Homodimer. Requires [2Fe-2S] cluster as cofactor. Mg(2+) is required as a cofactor.

It carries out the reaction (2R)-2,3-dihydroxy-3-methylbutanoate = 3-methyl-2-oxobutanoate + H2O. The catalysed reaction is (2R,3R)-2,3-dihydroxy-3-methylpentanoate = (S)-3-methyl-2-oxopentanoate + H2O. It functions in the pathway amino-acid biosynthesis; L-isoleucine biosynthesis; L-isoleucine from 2-oxobutanoate: step 3/4. Its pathway is amino-acid biosynthesis; L-valine biosynthesis; L-valine from pyruvate: step 3/4. Its function is as follows. Functions in the biosynthesis of branched-chain amino acids. Catalyzes the dehydration of (2R,3R)-2,3-dihydroxy-3-methylpentanoate (2,3-dihydroxy-3-methylvalerate) into 2-oxo-3-methylpentanoate (2-oxo-3-methylvalerate) and of (2R)-2,3-dihydroxy-3-methylbutanoate (2,3-dihydroxyisovalerate) into 2-oxo-3-methylbutanoate (2-oxoisovalerate), the penultimate precursor to L-isoleucine and L-valine, respectively. The sequence is that of Dihydroxy-acid dehydratase from Bordetella avium (strain 197N).